A 262-amino-acid polypeptide reads, in one-letter code: 14-3-3 protein epsilon (262 aa).

A disordered region spans residues 236–262 (QAEEVDPNAGDGEPKEQIQDVEDQDVS). S262 is subject to Phosphoserine.

Belongs to the 14-3-3 family. In terms of assembly, homodimer. Interacts with phosphorylated yki. Interacts with pav (when serine phosphorylated); the interaction is necessary for association of the complex pav-14-3-3epsilon complex to the microtubules, thereby inhibiting microtubule sliding.

Functionally, positively regulates Ras-mediated pathways. Acts downstream or parallel to Raf, but upstream of nuclear factors in Ras signaling. Three mutants have been isolated, that suppress the rough eye phenotype caused by mutated Ras1 (sev-Ras1 v12). Inhibits yki activity by restricting its nuclear localization. Together with pav, has a role in the inhibition of microtubule sliding during neurite outgrowth. This Drosophila melanogaster (Fruit fly) protein is 14-3-3 protein epsilon (14-3-3epsilon).